The sequence spans 69 residues: Putative membrane protein insertion efficiency factor (69 aa).

The protein belongs to the UPF0161 family.

Its subcellular location is the cell inner membrane. Its function is as follows. Could be involved in insertion of integral membrane proteins into the membrane. This is Putative membrane protein insertion efficiency factor from Nitrosomonas europaea (strain ATCC 19718 / CIP 103999 / KCTC 2705 / NBRC 14298).